A 182-amino-acid polypeptide reads, in one-letter code: Interferon gamma 1 (182 aa).

An N-terminal signal peptide occupies residues 1 to 21; it reads MIAQNMTIFFWGVCLLTSGWA. A glycan (N-linked (GlcNAc...) asparagine) is linked at Asn93.

This sequence belongs to the type II (or gamma) interferon family. In terms of assembly, homodimer. As to expression, highly expressed in spleen. Also detected at lower levels in brain, gill, kidney, heart, intestine and muscle. In immune cell populations, has highest expression in peripheral blood leukocytes and splenocytes. Detected in kidney-derived monocytes, neutrophils, macrophages and leukocytes.

The protein resides in the secreted. Its function is as follows. Cytokine which binds to interferon gamma receptor 1-like (ifngr1l). Has activating effects on primary macrophages and neutrophils. Induces nitric oxide production and phagocytic responses in macrophages. Primes macrophages and neutrophils for production of reactive oxygen intermediates (ROI). Stimulates phosphorylation and nuclear localization of the JAK/STAT signal transducer stat1. Promotes increased expression of a number of genes important for macrophage activity, including the interferon regulatory factors irf1, irf2, irf8 and irf9. In Carassius auratus (Goldfish), this protein is Interferon gamma 1.